The chain runs to 460 residues: Indoleacetamide hydrolase (460 aa).

Active-site charge relay system residues include K71 and S146. The active-site Acyl-ester intermediate is S169.

It belongs to the amidase family.

It functions in the pathway plant hormone metabolism; auxin biosynthesis. In terms of biological role, hydrolyzes indole-3-acetamide (IAM) into indole-3-acetic acid (IAA). The polypeptide is Indoleacetamide hydrolase (iaaH) (Pantoea agglomerans pv. gypsophilae (Erwinia herbicola)).